Consider the following 629-residue polypeptide: tRNA uridine 5-carboxymethylaminomethyl modification enzyme MnmG (629 aa).

Residue Gly-13–Gly-18 participates in FAD binding. An NAD(+)-binding site is contributed by Gly-273 to Phe-287.

Belongs to the MnmG family. As to quaternary structure, homodimer. Heterotetramer of two MnmE and two MnmG subunits. FAD is required as a cofactor.

Its subcellular location is the cytoplasm. Its function is as follows. NAD-binding protein involved in the addition of a carboxymethylaminomethyl (cmnm) group at the wobble position (U34) of certain tRNAs, forming tRNA-cmnm(5)s(2)U34. The polypeptide is tRNA uridine 5-carboxymethylaminomethyl modification enzyme MnmG (Hahella chejuensis (strain KCTC 2396)).